The following is a 256-amino-acid chain: Hydroxyacylglutathione hydrolase (256 aa).

Zn(2+)-binding residues include H57, H59, D61, H62, H115, D134, and H172.

Belongs to the metallo-beta-lactamase superfamily. Glyoxalase II family. As to quaternary structure, monomer. Requires Zn(2+) as cofactor.

It catalyses the reaction an S-(2-hydroxyacyl)glutathione + H2O = a 2-hydroxy carboxylate + glutathione + H(+). It participates in secondary metabolite metabolism; methylglyoxal degradation; (R)-lactate from methylglyoxal: step 2/2. In terms of biological role, thiolesterase that catalyzes the hydrolysis of S-D-lactoyl-glutathione to form glutathione and D-lactic acid. The protein is Hydroxyacylglutathione hydrolase of Jannaschia sp. (strain CCS1).